A 449-amino-acid chain; its full sequence is Putative F-box/FBD/LRR-repeat protein At5g62970 (449 aa).

The F-box domain maps to 2–50 (DKISGFSDDELLVKILSFLPFKFAITTSVLSKQWKFLWMRVPKLEYDED). LRR repeat units follow at residues 27-52 (TTSVLSKQWKFLWMRVPKLEYDEDSM), 81-107 (GHRMRSFIEKNLPLHSSPVIESLRLKF), 158-185 (TLKLRNNILVDVPHVFSLPSLKILHLER), 186-211 (VTYGDGESLQRLLSNCSVLEDLVVEL), 252-279 (YFKLTDLSKTFSGLIENMPKLEEANITA), and 328-354 (IHNAYWSELLYWLLKASPKLQNLEFDE). Residues 368 to 418 (FWNQPNSVPQCLLSTLQTFEWSGYPGSVQGKDLATYILRKSRQLKIATISI) form the FBD domain.

In Arabidopsis thaliana (Mouse-ear cress), this protein is Putative F-box/FBD/LRR-repeat protein At5g62970.